A 44-amino-acid polypeptide reads, in one-letter code: Viresin (44 aa).

It belongs to the insect A10/OS-D protein family.

The protein resides in the secreted. Has antibacterial activity against the Gram-negative bacteria E.coli and E.cloacae, but not against the Gram-negative bacteria P.aeruginosa, P.vulgaris, K.pneumoniae and S.enteritidis or the Gram-positive bacteria S.aureus, S.epidermidis and S.salivarius. This chain is Viresin, found in Heliothis virescens (Tobacco budworm moth).